Reading from the N-terminus, the 453-residue chain is Malate dehydrogenase [NADP], chloroplastic (453 aa).

A chloroplast-targeting transit peptide spans 1-68 (MAVVKLSPWA…RLSSPASIRC (68 aa)). Cysteines 88 and 93 form a disulfide. 117-123 (GAAGMIS) contributes to the NADP(+) binding site. 2 residues coordinate substrate: arginine 198 and arginine 204. NADP(+) contacts are provided by residues asparagine 211, glutamine 218, and 235-237 (VGN). Residues asparagine 237 and arginine 268 each contribute to the substrate site. Histidine 293 functions as the Proton acceptor in the catalytic mechanism. The cysteines at positions 429 and 441 are disulfide-linked.

It belongs to the LDH/MDH superfamily. MDH type 2 family. In terms of assembly, homodimer.

It localises to the plastid. The protein localises to the chloroplast. It catalyses the reaction (S)-malate + NADP(+) = oxaloacetate + NADPH + H(+). Its activity is regulated as follows. Chloroplast NADP-MDH is activated upon illumination. In order to be enzymatically active, disulfide bridges on the protein must be reduced by thioredoxin which receives electrons from ferredoxin and the electron transport system of photosynthesis. Its function is as follows. The chloroplastic, NADP-dependent form is essential for the photosynthesis C4 cycle, which allows plants to circumvent the problem of photorespiration. In C4 plants, NADP-MDH activity acts to convert oxaloacetate to malate in chloroplasts of mesophyll cells for transport to the bundle sheath cells. This chain is Malate dehydrogenase [NADP], chloroplastic, found in Flaveria bidentis (Coastal plain yellowtops).